Consider the following 283-residue polypeptide: Non-selective voltage-gated ion channel VDAC1 (283 aa).

Residue Ala-2 is modified to N-acetylalanine. Position 12 (Lys-12) interacts with ATP. Residue Lys-12 forms a Glycyl lysine isopeptide (Lys-Gly) (interchain with G-Cter in ubiquitin) linkage. At Ser-13 the chain carries Phosphoserine. Thr-19 carries the post-translational modification Phosphothreonine. Lys-20 is a binding site for ATP. Residue Lys-20 is modified to N6-acetyllysine; alternate. Position 20 is an N6-succinyllysine; alternate (Lys-20). A Glycyl lysine isopeptide (Lys-Gly) (interchain with G-Cter in ubiquitin); alternate cross-link involves residue Lys-20. Transmembrane regions (beta stranded) follow at residues 26–35 and 39–47; these read LIKLDLKTKS and LEFTSSGSA. Residues Lys-53 and Lys-61 each participate in a glycyl lysine isopeptide (Lys-Gly) (interchain with G-Cter in ubiquitin) cross-link. The beta stranded transmembrane segment at 54 to 64 threads the bilayer; the sequence is VTGSLETKYRW. Position 67 is a phosphotyrosine (Tyr-67). A run of 3 beta stranded transmembrane segments spans residues 69–76, 80–89, and 95–104; these read LTFTEKWN, TLGTEITVED, and LKLTFDSSFS. Residue Thr-107 is modified to Phosphothreonine. Position 109 is an N6-acetyllysine; alternate (Lys-109). A Glycyl lysine isopeptide (Lys-Gly) (interchain with G-Cter in ubiquitin); alternate cross-link involves residue Lys-109. A Glycyl lysine isopeptide (Lys-Gly) (interchain with G-Cter in ubiquitin) cross-link involves residue Lys-110. The next 4 membrane-spanning stretches (beta stranded) occupy residues 111–120, 123–130, 137–145, and 150–158; these read NAKIKTGYKR, VNLGCDVD, SIRGALVLG, and LAGYQMNFE. A Glycyl lysine isopeptide (Lys-Gly) (interchain with G-Cter in ubiquitin) cross-link involves residue Lys-161. 6 consecutive transmembrane segments (beta stranded) span residues 163–175, 178–185, 189–198, 202–211, 218–227, and 231–238; these read RVTQ…GYKT, FQLHTNVN, EFGGSIYQKV, LETAVNLAWT, RFGIAAKYQI, and ACFSAKVN. Position 193 is a phosphoserine; by NEK1 (Ser-193). Ser-240 carries the phosphoserine modification. 242 to 244 contacts NAD(+); sequence LIG. The chain crosses the membrane as a beta stranded span at residues 242–251; the sequence is LIGLGYTQTL. The residue at position 252 (Lys-252) is an N6-acetyllysine. The chain crosses the membrane as a beta stranded span at residues 254 to 263; sequence GIKLTLSALL. NAD(+) is bound at residue 260 to 264; it reads SALLD. Lys-266 carries the N6-acetyllysine; alternate modification. Lys-266 is covalently cross-linked (Glycyl lysine isopeptide (Lys-Gly) (interchain with G-Cter in ubiquitin); alternate). Residues 273 to 282 form a beta stranded membrane-spanning segment; it reads HKLGLGLEFQ. Lys-274 participates in a covalent cross-link: Glycyl lysine isopeptide (Lys-Gly) (interchain with G-Cter in ubiquitin).

Belongs to the eukaryotic mitochondrial porin family. In terms of assembly, homodimer and homotrimer; in response to cyclic AMP or calcium; oligomerization is required for scramblase activity. Component of the mitochondrial permeability transition pore complex (mPTPC), at least composed of SPG7, VDAC1 and PPIF. Interacts with SPG7, NIPSNAP2 and SLC25A30. Interacts with hexokinases including HK1. The HK1-VDAC1 complex interacts with ATF2. Interacts with BCL2L1. Interacts with BAK1. Interacts with RTL10/BOP (via BH3 domain). Interacts with amyloid-beta and APP; induces VDAC1 dephosphorylation. Interacts with TMEM41B. Interacts with BCAP31. Interacts with HSPA9; this interaction couples ITPR1 to VDAC1. Phosphorylation at Ser-193 by NEK1 promotes the closed conformational state preventing excessive mitochondrial membrane permeability and subsequent apoptotic cell death after injury. Phosphorylation by the AKT-GSK3B axis stabilizes the protein probably by preventing ubiquitin-mediated proteasomal degradation. Post-translationally, ubiquitinated. Undergoes monoubiquitination and polyubiquitination by PRKN; monoubiquitination at Lys-274 inhibits apoptosis, whereas polyubiquitination leads to its degradation and promotes mitophagy. Deubiquitinated by USP30.

It localises to the mitochondrion outer membrane. The protein localises to the cell membrane. The protein resides in the membrane raft. The catalysed reaction is chloride(in) = chloride(out). It catalyses the reaction K(+)(in) = K(+)(out). The enzyme catalyses ATP(in) = ATP(out). It carries out the reaction Ca(2+)(in) = Ca(2+)(out). The catalysed reaction is Na(+)(in) = Na(+)(out). It catalyses the reaction Mg(2+)(in) = Mg(2+)(out). The enzyme catalyses L-glutamate(out) = L-glutamate(in). It carries out the reaction dopamine(out) = dopamine(in). The catalysed reaction is acetylcholine(in) = acetylcholine(out). It catalyses the reaction Fe(III)-[cytochrome c](out) = Fe(III)-[cytochrome c](in). The enzyme catalyses a 1,2-diacyl-sn-glycero-3-phosphocholine(in) = a 1,2-diacyl-sn-glycero-3-phosphocholine(out). It carries out the reaction a 1,2-diacyl-sn-glycero-3-phospho-L-serine(in) = a 1,2-diacyl-sn-glycero-3-phospho-L-serine(out). Its activity is regulated as follows. Inhibited by nitric oxide. Non-selective voltage-gated ion channel that mediates the transport of anions and cations through the mitochondrion outer membrane and plasma membrane. The channel at the outer mitochondrial membrane allows diffusion of small hydrophilic molecules; in the plasma membrane it is involved in cell volume regulation and apoptosis. It adopts an open conformation at low or zero membrane potential and a closed conformation at potentials above 30-40 mV. The open state has a weak anion selectivity whereas the closed state is cation-selective. Binds various signaling molecules, including the sphingolipid ceramide, the phospholipid phosphatidylcholine, and the sterols cholesterol and oxysterol. In depolarized mitochondria, acts downstream of PRKN and PINK1 to promote mitophagy or prevent apoptosis; polyubiquitination by PRKN promotes mitophagy, while monoubiquitination by PRKN decreases mitochondrial calcium influx which ultimately inhibits apoptosis. May participate in the formation of the permeability transition pore complex (PTPC) responsible for the release of mitochondrial products that triggers apoptosis. May mediate ATP export from cells. Part of a complex composed of HSPA9, ITPR1 and VDAC1 that regulates mitochondrial calcium-dependent apoptosis by facilitating calcium transport from the ER lumen to the mitochondria intermembrane space thus providing calcium for the downstream calcium channel MCU that directly releases it into mitochondria matrix. Mediates cytochrome c efflux. In terms of biological role, catalyzes the scrambling of phospholipids across the outer mitochondrial membrane; the mechanism is unrelated to channel activity and is capable of translocating both anionic and zwitterionic phospholipids. The protein is Non-selective voltage-gated ion channel VDAC1 of Sus scrofa (Pig).